Here is a 553-residue protein sequence, read N- to C-terminus: MKKVTAMLFTMAVGLNAVSMAAKAKATEEQETDVLLIGGGIMSATLGTYLQELEPEWSMTMVERLDGVAQESSNGWNNAGTGHSALMELNYTPKKADGSVSIEKAVDINEAFQVSRQFWAHQVQSGVLHEPHSFINTVPHMSFVWGDDNVNFLRARYTALQQSTLFRGMRYSEDHAQIKEWAPLVMEGRDPKQKVAATRTEIGTDVNYGEITRQLVASLQKKPNFALQLNTEVRGFKRNADNSWTVTVADLKNGEAEHAIKAKFVFIGAGGAALKLLQETGIPEAKDYAGFPVGGQFLVSENPDVVNNHLAKVYGQASVGAPPMSVPHIDTRILDGKRVVLFGPFATFSTKFLKNGSLWDLLSSTTTSNFMPMVNVGMDNFDLVKYLISQVMLSDDERFEALKEYYPQAKKEDWRLWQAGQRVQIIKRDEDKGGVLRLGTEVVSDKDGTIAALLGASPGASTAAPIMLHLMEKVFKEKVASPEWQAKLKTIVPSYGTKLNGNIEATEQELQYTSDVLGLKYDKPQVVDEAPKPQLKPQVQPQPAHKAVADIAL.

Over residues 534–543 (QLKPQVQPQP) the composition is skewed to low complexity. The segment at 534 to 553 (QLKPQVQPQPAHKAVADIAL) is disordered.

The protein belongs to the MQO family. The cofactor is FAD.

The enzyme catalyses (S)-malate + a quinone = a quinol + oxaloacetate. Its pathway is carbohydrate metabolism; tricarboxylic acid cycle; oxaloacetate from (S)-malate (quinone route): step 1/1. In Citrobacter koseri (strain ATCC BAA-895 / CDC 4225-83 / SGSC4696), this protein is Probable malate:quinone oxidoreductase.